Consider the following 129-residue polypeptide: Large ribosomal subunit protein bL21 (129 aa).

Residues 102–129 are disordered; the sequence is TDNAKPTKGPRPKKEKVAKEATKEDAAA. Residues 116–129 are compositionally biased toward basic and acidic residues; that stretch reads EKVAKEATKEDAAA.

The protein belongs to the bacterial ribosomal protein bL21 family. As to quaternary structure, part of the 50S ribosomal subunit. Contacts protein L20.

This protein binds to 23S rRNA in the presence of protein L20. The sequence is that of Large ribosomal subunit protein bL21 from Bradyrhizobium diazoefficiens (strain JCM 10833 / BCRC 13528 / IAM 13628 / NBRC 14792 / USDA 110).